The following is a 212-amino-acid chain: RNA chaperone ProQ (212 aa).

Basic and acidic residues-rich tracts occupy residues 102 to 124 (ALKE…EKAK) and 132 to 144 (RKAD…DKPK). The disordered stretch occupies residues 102-149 (ALKESKERVFASRRTNTKEEKAKQPRRPAPRKADAAAKSDKPKAAPKA).

The protein belongs to the ProQ family.

The protein resides in the cytoplasm. RNA chaperone with significant RNA binding, RNA strand exchange and RNA duplexing activities. The polypeptide is RNA chaperone ProQ (Aeromonas hydrophila subsp. hydrophila (strain ATCC 7966 / DSM 30187 / BCRC 13018 / CCUG 14551 / JCM 1027 / KCTC 2358 / NCIMB 9240 / NCTC 8049)).